A 425-amino-acid chain; its full sequence is Histidine--tRNA ligase (425 aa).

This sequence belongs to the class-II aminoacyl-tRNA synthetase family. Homodimer.

Its subcellular location is the cytoplasm. The enzyme catalyses tRNA(His) + L-histidine + ATP = L-histidyl-tRNA(His) + AMP + diphosphate + H(+). The sequence is that of Histidine--tRNA ligase from Aeromonas hydrophila subsp. hydrophila (strain ATCC 7966 / DSM 30187 / BCRC 13018 / CCUG 14551 / JCM 1027 / KCTC 2358 / NCIMB 9240 / NCTC 8049).